A 207-amino-acid polypeptide reads, in one-letter code: Recombination protein RecR (207 aa).

The C4-type zinc finger occupies 60-75 (CRRCHNISDSGVCTIC). Residues 83-178 (STLCVVENIR…RVSVIARGIA (96 aa)) form the Toprim domain.

The protein belongs to the RecR family.

Functionally, may play a role in DNA repair. It seems to be involved in an RecBC-independent recombinational process of DNA repair. It may act with RecF and RecO. In Porphyromonas gingivalis (strain ATCC 33277 / DSM 20709 / CIP 103683 / JCM 12257 / NCTC 11834 / 2561), this protein is Recombination protein RecR.